Here is a 574-residue protein sequence, read N- to C-terminus: ATP synthase subunit beta, mitochondrial (574 aa).

The N-terminal 26 residues, 1-26, are a transit peptide targeting the mitochondrion; sequence MLSSVRLAALRAGKTNSVFQAVRAFA. 183–190 lines the ATP pocket; it reads GGAGVGKT.

This sequence belongs to the ATPase alpha/beta chains family. In terms of assembly, F-type ATPases have 2 components, CF(1) - the catalytic core - and CF(0) - the membrane proton channel. CF(1) has five subunits: alpha(3), beta(3), gamma(1), delta(1), epsilon(1). CF(0) has three main subunits: a, b and c.

Its subcellular location is the mitochondrion. The protein resides in the mitochondrion inner membrane. The catalysed reaction is ATP + H2O + 4 H(+)(in) = ADP + phosphate + 5 H(+)(out). In terms of biological role, mitochondrial membrane ATP synthase (F(1)F(0) ATP synthase or Complex V) produces ATP from ADP in the presence of a proton gradient across the membrane which is generated by electron transport complexes of the respiratory chain. F-type ATPases consist of two structural domains, F(1) - containing the extramembraneous catalytic core, and F(0) - containing the membrane proton channel, linked together by a central stalk and a peripheral stalk. During catalysis, ATP synthesis in the catalytic domain of F(1) is coupled via a rotary mechanism of the central stalk subunits to proton translocation. Subunits alpha and beta form the catalytic core in F(1). Rotation of the central stalk against the surrounding alpha(3)beta(3) subunits leads to hydrolysis of ATP in three separate catalytic sites on the beta subunits. The protein is ATP synthase subunit beta, mitochondrial (ATP2) of Chlamydomonas reinhardtii (Chlamydomonas smithii).